The chain runs to 366 residues: Mitogen-activated protein kinase sakA (366 aa).

In terms of domain architecture, Protein kinase spans 20 to 299 (YTDLQPVGMG…AGEALAHEYL (280 aa)). Residues 26–34 (VGMGAFGLV) and Lys-49 each bind ATP. Residue Asp-141 is the Proton acceptor of the active site. A Phosphothreonine modification is found at Thr-171. The TXY signature appears at 171 to 173 (TGY). Tyr-173 carries the phosphotyrosine modification.

The protein belongs to the protein kinase superfamily. Ser/Thr protein kinase family. MAP kinase subfamily. HOG1 sub-subfamily. In terms of assembly, interacts with the AGC kinase ypkA. Interacts with sakA upon osmotic and cell wall stresses. Mg(2+) is required as a cofactor. Post-translationally, dually phosphorylated on Thr-171 and Tyr-173, which activates the enzyme. Environmental stresses such as high temperature, osmotic stress, cold stress or ethanol stress modulate the activation of sakA via phosphorylation.

It is found in the cytoplasm. Its subcellular location is the nucleus. The catalysed reaction is L-seryl-[protein] + ATP = O-phospho-L-seryl-[protein] + ADP + H(+). It carries out the reaction L-threonyl-[protein] + ATP = O-phospho-L-threonyl-[protein] + ADP + H(+). Activated by tyrosine and threonine phosphorylation. Deactivated by protein phosphatase 2C homolog 2 ptcB. In terms of biological role, proline-directed serine/threonine-protein kinase involved in a signal transduction pathway that is activated by changes in the osmolarity of the extracellular environment. Controls osmotic regulation of transcription of target genes. Involved in environmental stress response. With mpkC, plays a redundant or cooperative role in the conidial stress resistance. Also plays a supportive role in osmotic stress adaptation when sakA is deficient. Involved in paradoxical growth, the cell wall integrity (CWI) pathway and biofilm formation. Also collaborates with mpkC to allow ful virulence in a neutropenic murine model ofinvasive pulmonary aspergillosis. MpkC and sakA have both independent and collaborative functions during the transcriptional response to transient osmotic stress and sakA not only seems to modulate pathways involved in nucleotide, fatty acid, nitrogen and organic acid biosynthesis but is also important for the activation of genes involved in mitochondrial and endoplasmic reticulum functions. This is Mitogen-activated protein kinase sakA from Aspergillus fumigatus (strain ATCC MYA-4609 / CBS 101355 / FGSC A1100 / Af293) (Neosartorya fumigata).